The chain runs to 101 residues: PAT complex subunit Asterix (101 aa).

A disordered region spans residues Met-1 to Asp-26. Over Met-1–Pro-27 the chain is Cytoplasmic. Residues Thr-28 to Leu-46 traverse the membrane as a helical segment. Lys-47 is a topological domain (lumenal). A helical transmembrane segment spans residues Leu-48–Asn-65. At Ser-66 to Ser-69 the chain is on the cytoplasmic side. The chain crosses the membrane as a helical span at residues Glu-70 to Tyr-90. Residues Leu-91–Trp-101 lie on the Lumenal side of the membrane.

Belongs to the Asterix family. In terms of assembly, component of the multi-pass translocon (MPT) complex.

The protein localises to the endoplasmic reticulum membrane. Functionally, component of the multi-pass translocon (MPT) complex that mediates insertion of multi-pass membrane proteins into the lipid bilayer of membranes. The MPT complex takes over after the SEC61 complex: following membrane insertion of the first few transmembrane segments of proteins by the SEC61 complex, the MPT complex occludes the lateral gate of the SEC61 complex to promote insertion of subsequent transmembrane regions. In Gallus gallus (Chicken), this protein is PAT complex subunit Asterix (WDR83OS).